Consider the following 225-residue polypeptide: UPF0173 metal-dependent hydrolase Pisl_0803 (225 aa).

It belongs to the UPF0173 family.

This is UPF0173 metal-dependent hydrolase Pisl_0803 from Pyrobaculum islandicum (strain DSM 4184 / JCM 9189 / GEO3).